Consider the following 280-residue polypeptide: MEPLVAELKQKIEDTLCPFGFEVYPFQVAWYNALLPPAFHLPLPGPTLAFLVLSTPAMFDQALKPFLQSHHLQPLTDPVDQCVAYHLGRVRESLPELQIEVIADYEVHPNRRPKILAQTAAHVAGAAYYYQRQDVESDPWGTQHIAGVCIHPRFGGWFAIRGVVLLRGTEVPNLPPTKPVDCVPTRADRISLLERFNFHWRDWTYRDAVTPQERYSEEQKAYFSTPPAQRLALLGLLQPSEEPSSPSQELHITTLLSKKPQNPRRGWLSPTVSPPISPGP.

Residues Asp104, 115 to 118 (ILAQ), 129 to 131 (YYQ), Cys149, and Ile160 contribute to the substrate site. Phosphoserine occurs at positions 245, 247, 273, and 277. The interval 256–280 (LSKKPQNPRRGWLSPTVSPPISPGP) is disordered.

It belongs to the MMACHC family. As to quaternary structure, monomer in the absence of bound substrate. Homodimer; dimerization is triggered by binding to FMN or adenosylcobalamin. Interacts with LMBRD1 and ABCD4; the interaction ensures the transport of cobalamin from the lysosome to the cytoplasm. Forms a multiprotein complex with MMADHC, MTR and MTRR; the interaction with MTR could modulate MMACHC-dependent processing of cobalamin. Heterodimer with MMADHC; the interaction might play a role in the regulation of the balance between AdoCbl and MeCbl synthesis. Requires FAD as cofactor. FMN serves as cofactor.

It is found in the cytoplasm. It localises to the cytosol. It carries out the reaction 2 cob(II)alamin-[cyanocobalamin reductase] + 2 hydrogen cyanide + NADP(+) = 2 cyanocob(III)alamin + 2 apo-[cyanocobalamin reductase] + NADPH + H(+). The enzyme catalyses apo-[alkylcobalamin reductase] + an R-cob(III)alamin + glutathione = cob(I)alamin-[alkylcobalamin reductase] + an S-substituted glutathione + H(+). The catalysed reaction is apo-[alkylcobalamin reductase] + methylcob(III)alamin + glutathione = S-methyl glutathione + cob(I)alamin-[alkylcobalamin reductase] + H(+). It catalyses the reaction apo-[alkylcobalamin reductase] + adenosylcob(III)alamin + glutathione = S-adenosylglutathione + cob(I)alamin-[alkylcobalamin reductase] + H(+). In terms of biological role, cobalamin (vitamin B12) cytosolic chaperone that catalyzes the reductive decyanation of cyanocob(III)alamin (cyanocobalamin, CNCbl) to yield cob(II)alamin and cyanide, using FAD or FMN as cofactors and NADPH as cosubstrate. Cyanocobalamin constitutes the inactive form of vitamin B12 introduced from the diet, and is converted into the active cofactors methylcobalamin (MeCbl) involved in methionine biosynthesis, and 5'-deoxyadenosylcobalamin (AdoCbl) involved in the TCA cycle. Forms a complex with the lysosomal transporter ABCD4 and its chaperone LMBRD1, to transport cobalamin across the lysosomal membrane into the cytosol. The processing of cobalamin in the cytosol occurs in a multiprotein complex composed of at least MMACHC, MMADHC, MTRR (methionine synthase reductase) and MTR (methionine synthase) which may contribute to shuttle safely and efficiently cobalamin towards MTR in order to produce methionine. Also acts as a glutathione transferase by catalyzing the dealkylation of the alkylcob(III)alamins MeCbl and AdoCbl, using the thiolate of glutathione for nucleophilic displacement to generate cob(I)alamin and the corresponding glutathione thioether. The conversion of incoming MeCbl or AdoCbl into a common intermediate cob(I)alamin is necessary to meet the cellular needs for both cofactors. Cysteine and homocysteine cannot substitute for glutathione in this reaction. The polypeptide is Cyanocobalamin reductase / alkylcobalamin dealkylase (MMACHC) (Bos taurus (Bovine)).